The chain runs to 870 residues: DNA mismatch repair protein MutS (870 aa).

629–636 (GPNMGGKS) is a binding site for ATP.

It belongs to the DNA mismatch repair MutS family.

In terms of biological role, this protein is involved in the repair of mismatches in DNA. It is possible that it carries out the mismatch recognition step. This protein has a weak ATPase activity. The polypeptide is DNA mismatch repair protein MutS (Polaromonas naphthalenivorans (strain CJ2)).